The following is a 790-amino-acid chain: Cadherin-20 (790 aa).

Positions 1–25 are cleaved as a signal peptide; it reads MSCKRSYHRHCALVYYMVLLDLTNA. Residues 26 to 52 constitute a propeptide that is removed on maturation; sequence VFEFSHPLIRDSGNSQSRQLLHHRLKR. Over 26–612 the chain is Extracellular; that stretch reads VFEFSHPLIR…PYTLPISLSR (587 aa). 5 Cadherin domains span residues 54 to 158, 159 to 267, 268 to 382, 383 to 487, and 487 to 605; these read WVWN…EPKF, LDGP…PPRF, PQKH…PPVF, GSSF…APTF, and FTKF…EPYT. 5 N-linked (GlcNAc...) asparagine glycosylation sites follow: Asn-254, Asn-283, Asn-413, Asn-454, and Asn-535. A helical transmembrane segment spans residues 613 to 633; it reads GALIAILTCIFVLLVLVLLIL. Residues 634–790 are Cytoplasmic-facing; sequence SMRRHRKQPY…YGTKDNNGSL (157 aa).

In terms of tissue distribution, detected in embryonic posterior neural plate, embryonic neural tube, sulcus limitans and embryonic kidney.

It is found in the cell membrane. In terms of biological role, cadherins are calcium-dependent cell adhesion proteins. They preferentially interact with themselves in a homophilic manner in connecting cells; cadherins may thus contribute to the sorting of heterogeneous cell types. The sequence is that of Cadherin-20 (cdh20) from Xenopus laevis (African clawed frog).